A 167-amino-acid polypeptide reads, in one-letter code: Ribosome rescue factor SmrB (167 aa).

One can recognise a Smr domain in the interval 91 to 166 (LDLHGLTREQ…GEAAILILVD (76 aa)).

The protein belongs to the SmrB family. As to quaternary structure, associates with collided ribosomes, but not with correctly translating polysomes.

Acts as a ribosome collision sensor. Detects stalled/collided disomes (pairs of ribosomes where the leading ribosome is stalled and a second ribosome has collided with it) and endonucleolytically cleaves mRNA at the 5' boundary of the stalled ribosome. Stalled/collided disomes form a new interface (primarily via the 30S subunits) that binds SmrB. Cleaved mRNA becomes available for tmRNA ligation, leading to ribosomal subunit dissociation and rescue of stalled ribosomes. The chain is Ribosome rescue factor SmrB from Haemophilus influenzae (strain ATCC 51907 / DSM 11121 / KW20 / Rd).